Here is a 387-residue protein sequence, read N- to C-terminus: Protein-glutamate methylesterase/protein-glutamine glutaminase 2 (387 aa).

Residues 4-121 (KVLVVDDSGF…SRNPQKVKQL (118 aa)) form the Response regulatory domain. A 4-aspartylphosphate modification is found at aspartate 55. Low complexity predominate over residues 148–183 (AAPAAPTSSSRAPAPTTAPARAVPTRTAAPATAPAA). The interval 148–199 (AAPAAPTSSSRAPAPTTAPARAVPTRTAAPATAPAAHAHHAPAHPTTSGTPK) is disordered. The region spanning 192 to 384 (PTTSGTPKRK…LDDIGRHLVE (193 aa)) is the CheB-type methylesterase domain. Residues serine 211, histidine 238, and aspartate 331 contribute to the active site.

Belongs to the CheB family. Phosphorylated by CheA. Phosphorylation of the N-terminal regulatory domain activates the methylesterase activity.

It is found in the cytoplasm. The enzyme catalyses [protein]-L-glutamate 5-O-methyl ester + H2O = L-glutamyl-[protein] + methanol + H(+). It carries out the reaction L-glutaminyl-[protein] + H2O = L-glutamyl-[protein] + NH4(+). Functionally, involved in chemotaxis. Part of a chemotaxis signal transduction system that modulates chemotaxis in response to various stimuli. Catalyzes the demethylation of specific methylglutamate residues introduced into the chemoreceptors (methyl-accepting chemotaxis proteins or MCP) by CheR. Also mediates the irreversible deamidation of specific glutamine residues to glutamic acid. The sequence is that of Protein-glutamate methylesterase/protein-glutamine glutaminase 2 from Pseudomonas savastanoi pv. phaseolicola (strain 1448A / Race 6) (Pseudomonas syringae pv. phaseolicola (strain 1448A / Race 6)).